We begin with the raw amino-acid sequence, 405 residues long: uncharacterized protein (405 aa).

The N-terminal stretch at 1–20 is a signal peptide; the sequence is MKAKLALSIIGLVLASLVAG. Cys21 carries the N-acetylcysteine modification. Cys21 carries S-archaeol cysteine lipidation.

The protein belongs to the BMP lipoprotein family.

Its subcellular location is the cell membrane. This is an uncharacterized protein from Pyrococcus horikoshii (strain ATCC 700860 / DSM 12428 / JCM 9974 / NBRC 100139 / OT-3).